Consider the following 527-residue polypeptide: Transcription initiation factor TFIID subunit 6b (527 aa).

Residues 3–99 (TKESIEVIAQ…NLEPTSGSKS (97 aa)) form the Histone-fold domain. Disordered stretches follow at residues 410–442 (SPPTSSVWKTNGKLTSPRQSKRKASSDNLTHQP) and 462–492 (MRGTTTVPQQSHTDADARHHNSPSTIAPKTS). Polar residues-rich tracts occupy residues 416–427 (VWKTNGKLTSPR) and 462–473 (MRGTTTVPQQSH).

Belongs to the TAF6 family. Component of the TFIID complex. TFIID is composed of TATA binding protein (TBP) and a number of TBP-associated factors (TAFs) whose MWs range from 14-217 kDa. Interacts with TAF5 and TAF9. As to expression, expressed in roots, leaves, inflorescences and siliques.

Its subcellular location is the nucleus. In terms of biological role, TAFs are components of the transcription factor IID (TFIID) complex that is essential for mediating regulation of RNA polymerase transcription. Not redundant with TAF6. The protein is Transcription initiation factor TFIID subunit 6b (TAF6B) of Arabidopsis thaliana (Mouse-ear cress).